A 526-amino-acid polypeptide reads, in one-letter code: Fumitremorgin C synthase (526 aa).

Residues 4 to 24 (LPLSPAVLFLTITLPILYFWI) form a helical membrane-spanning segment. Cys-443 lines the heme pocket.

It belongs to the cytochrome P450 family. Heme is required as a cofactor.

It localises to the membrane. The enzyme catalyses tryprostatin A + reduced [NADPH--hemoprotein reductase] + O2 = fumitremorgin C + oxidized [NADPH--hemoprotein reductase] + 2 H2O + H(+). It participates in mycotoxin biosynthesis. Its function is as follows. Cytochrome P450 monooxygenase; part of the gene cluster that mediates the biosynthesis of fumitremorgins, indole alkaloids that carry not only intriguing chemical structures, but also interesting biological and pharmacological activities. The biosynthesis of fumitremorgin-type alkaloids begins by condensation of the two amino acids L-tryptophan and L-proline to brevianamide F, catalyzed by the non-ribosomal peptide synthetase ftmPS/ftmA. Brevianamide F is then prenylated by the prenyltransferase ftmPT1/ftmB in the presence of dimethylallyl diphosphate, resulting in the formation of tryprostatin B. The three cytochrome P450 monooxygenases, ftmP450-1/ftmC, ftmP450-2/ftmE and ftmP450-3/FtmG, are responsible for the conversion of tryprostatin B to 6-hydroxytryprostatin B, tryprostatin A to fumitremorgin C and fumitremorgin C to 12,13-dihydroxyfumitremorgin C, respectively. The putative methyltransferase ftmMT/ftmD is expected for the conversion of 6-hydroxytryprostatin B to tryprostatin A. FtmPT2/FtmH catalyzes the prenylation of 12,13-dihydroxyfumitre-morgin C in the presence of dimethylallyl diphosphate, resulting in the formation of fumitremorgin B. Fumitremorgin B is further converted to verruculogen by ftmOx1/ftmF via the insertion of an endoperoxide bond between the two prenyl moieties. Finally, verruculogen is further converted to fumitremorgin A by the verruculogen prenyltransferase ftmPT3. The sequence is that of Fumitremorgin C synthase from Neosartorya fischeri (strain ATCC 1020 / DSM 3700 / CBS 544.65 / FGSC A1164 / JCM 1740 / NRRL 181 / WB 181) (Aspergillus fischerianus).